We begin with the raw amino-acid sequence, 539 residues long: Chaperonin GroEL (539 aa).

ATP is bound by residues 29–32 (TLGP), 86–90 (DGTTT), glycine 413, 479–481 (DAL), and aspartate 495.

It belongs to the chaperonin (HSP60) family. Forms a cylinder of 14 subunits composed of two heptameric rings stacked back-to-back. Interacts with the co-chaperonin GroES.

The protein localises to the cytoplasm. The catalysed reaction is ATP + H2O + a folded polypeptide = ADP + phosphate + an unfolded polypeptide.. In terms of biological role, together with its co-chaperonin GroES, plays an essential role in assisting protein folding. The GroEL-GroES system forms a nano-cage that allows encapsulation of the non-native substrate proteins and provides a physical environment optimized to promote and accelerate protein folding. The sequence is that of Chaperonin GroEL from Pseudothermotoga lettingae (strain ATCC BAA-301 / DSM 14385 / NBRC 107922 / TMO) (Thermotoga lettingae).